The sequence spans 429 residues: Phosphoribosylamine--glycine ligase (429 aa).

Residues 109–316 (KDFLARHKIP…LVELCLAACE (208 aa)) enclose the ATP-grasp domain. 135–196 (LREKGAPIVI…EEFLDGEEAS (62 aa)) contributes to the ATP binding site. The disordered stretch occupies residues 212–236 (SQDHKRVGDKDTGPNTGGMGAYSPA). Basic and acidic residues predominate over residues 213 to 223 (QDHKRVGDKDT). Positions 286 and 288 each coordinate Mg(2+).

Belongs to the GARS family. Monomer. Mg(2+) is required as a cofactor. Requires Mn(2+) as cofactor.

It catalyses the reaction 5-phospho-beta-D-ribosylamine + glycine + ATP = N(1)-(5-phospho-beta-D-ribosyl)glycinamide + ADP + phosphate + H(+). Its pathway is purine metabolism; IMP biosynthesis via de novo pathway; N(1)-(5-phospho-D-ribosyl)glycinamide from 5-phospho-alpha-D-ribose 1-diphosphate: step 2/2. Functionally, catalyzes the reversible conversion of phosphoribosylamine to glycinamide ribonucleotide, an enzymatic step in purine biosynthesis pathway. This is Phosphoribosylamine--glycine ligase (purD) from Escherichia coli (strain K12).